A 105-amino-acid polypeptide reads, in one-letter code: uncharacterized protein (105 aa).

The next 2 helical transmembrane spans lie at 7-26 (VLSVISVFSAAALVYRWLSL) and 30-52 (VDMTVIFFATLLIASLTLLLISI).

Its subcellular location is the cell membrane. This is an uncharacterized protein from Archaeoglobus fulgidus (strain ATCC 49558 / DSM 4304 / JCM 9628 / NBRC 100126 / VC-16).